A 325-amino-acid polypeptide reads, in one-letter code: HTH-type transcriptional regulator VqsM (325 aa).

An HTH araC/xylS-type domain is found at 226–323 (QRIELFLDSI…GQSTTEFRNS (98 aa)). 2 consecutive DNA-binding regions (H-T-H motif) follow at residues 243-264 (VTTAKYLRMNERTVRRRLADEG) and 290-313 (VDRISDILGYSETASFRHAFRRWT).

Its function is as follows. Transcriptional regulator involved in both the repression (at least 99 genes, such as mexR and algU) and in the activation (at least 203 genes, such as mvfR, rsaL, vqsR and rpoS) of regulatory or putative regulatory proteins which are implicated in quorum sensing, virulence and multidrug resistance. The chain is HTH-type transcriptional regulator VqsM (vqsM) from Pseudomonas aeruginosa (strain ATCC 15692 / DSM 22644 / CIP 104116 / JCM 14847 / LMG 12228 / 1C / PRS 101 / PAO1).